The following is a 133-amino-acid chain: Large ribosomal subunit protein bL17 (133 aa).

Belongs to the bacterial ribosomal protein bL17 family. Part of the 50S ribosomal subunit. Contacts protein L32.

The polypeptide is Large ribosomal subunit protein bL17 (Polaromonas naphthalenivorans (strain CJ2)).